The primary structure comprises 238 residues: Protein LicA homolog (238 aa).

This sequence belongs to the peptidase S49 family.

The sequence is that of Protein LicA homolog (licA) from Mycoplasma capricolum subsp. capricolum (strain California kid / ATCC 27343 / NCTC 10154).